The chain runs to 21 residues: Neuropeptide gamma (21 aa).

The segment at 1–21 (SSANPQITRKRHKINSFVGLM) is disordered. Met21 carries the methionine amide modification.

This sequence belongs to the tachykinin family.

It is found in the secreted. Functionally, tachykinins are active peptides which excite neurons, evoke behavioral responses, and contract (directly or indirectly) many smooth muscles. Is a potent vasoconstrictor and secretagogue that plays a regulatory role in the central control of ventilation, in particular, the heart rate variability (HRV). This Oncorhynchus mykiss (Rainbow trout) protein is Neuropeptide gamma.